Reading from the N-terminus, the 496-residue chain is L-arabinose isomerase (496 aa).

Glu-306, Glu-331, His-348, and His-447 together coordinate Mn(2+).

Belongs to the arabinose isomerase family. Mn(2+) serves as cofactor.

The enzyme catalyses beta-L-arabinopyranose = L-ribulose. Its pathway is carbohydrate degradation; L-arabinose degradation via L-ribulose; D-xylulose 5-phosphate from L-arabinose (bacterial route): step 1/3. Catalyzes the conversion of L-arabinose to L-ribulose. This chain is L-arabinose isomerase, found in Geobacillus kaustophilus (strain HTA426).